The sequence spans 108 residues: Cytochrome c-555 (108 aa).

The first 22 residues, 1–22 (MSRFVSAALVGAALLVSGNAFA), serve as a signal peptide directing secretion. Residues Cys36, Cys39, His40, and Met82 each contribute to the heme c site.

Post-translationally, binds 1 heme c group covalently per subunit.

Functionally, this basic c-type monoheme cytochrome has been found exclusively in the green photosynthetic bacteria, although its role in bacterial photosynthesis is not established. It has an unusually low redox potential compared with mitochondrial cytochrome c. It is reactive with cytochrome c oxidases but not with reductases. The protein is Cytochrome c-555 of Chlorobaculum tepidum (strain ATCC 49652 / DSM 12025 / NBRC 103806 / TLS) (Chlorobium tepidum).